Consider the following 1010-residue polypeptide: MTKHPPNRRGISFEVGAQLEARDRLKNWYPAHIEDIDYEEGRVLIHFKRWNHRYDEWFCWDSPYLRPLEKIQLRKEGLHDEDGSSEFQINQQVLACWSDCRFYPARVTAVNKDGTYTVKFYDGVVQTVKHIHVKAFSKDQNIVGNARPKETDHKSLSSSPEKREKFKEQRKVTVNVKKDKVEKALKTEKRPKQPDKEGKLICSEKGKVSEKSLPKNEKEDKENISENEREYSGDAQVEKKPEKDLVKNPQENLKEPKRKRGRPPSITPTAVDSNSQTLQPITLELRRRKISKRSDTPLKRPRLDKNSPQEQSKKRSENSDKDLSRRRSSRLSTNGTREILDPDSIVPDLVHTVDTNPLPDKSPSAKDSAEGQLKSPLEAGQVSSALTCHPIGDGLGAADLELNCKSMGENTMKTEPVSPLAEVQEVSTVEVPNTLKKVDDSVTLNVPAVDLDHKFRCKVLDCLKFFRKAKLLHYHMKYFHGMEKSPEPEEGPGKTHVQTRGSAVPDKTSQESLTRKRVSASSPTAKEKEKTKEKKFKELVRVKPKKKKKKKKKTKPECPCSEDISDTSQEPSPPKTFAVTRCGSSHKPGVHMSPQLHGSDNGNHKGKLKTCEEDNLSESSSESFLWSDEEYGQDVDVTTNPDEELEGDDRYDFEVVRCICEVQEENDFMIQCEECQCWQHGVCMGLLEENVPEKYTCYVCQDPPGQRPGFKYWYDKEWLSRGHMHGLAFLDQNYSHQNARKIVATHQLLGDVQRVIQVLHGLQLKMSILQSREHPDLQLWCQPWKQHSGEGRAHPRHIHITDARSEESPSYRTLNGAVEKPSPLPRSVEESYITSEHCYQKPRAYYPAVEQRLVVETRGSALDAAVSPLCENGDDSLSPRLGWPIDQDRSRGDIDPKPSSPKVREYISKNVLPEETPARKLLDRGGEGLVSSQHQWQFNLLTHVESLQDEVTHRMDSIEKELDVLESWLDYTGELEPPEPLARLPQLKHCIKQLLTDLGKVQQIALCCST.

2 consecutive Tudor domains span residues 4-69 (HPPN…RPLE) and 83-147 (GSSE…GNAR). Disordered regions lie at residues 142-373 (IVGN…EGQL) and 483-609 (EKSP…GKLK). Over residues 147–246 (RPKETDHKSL…VEKKPEKDLV (100 aa)) the composition is skewed to basic and acidic residues. S159 is subject to Phosphoserine. A DNA-binding region (a.T hook) is located at residues 257 to 269 (KRKRGRPPSITPT). A compositionally biased stretch (polar residues) spans 267–280 (TPTAVDSNSQTLQP). Composition is skewed to basic and acidic residues over residues 292–325 (KRSDTPLKRPRLDKNSPQEQSKKRSENSDKDLSR), 483–493 (EKSPEPEEGPG), and 525–541 (AKEKEKTKEKKFKELVR). A C2H2-type zinc finger spans residues 455–485 (FRCKVLDCLKFFRKAKLLHYHMKYFHGMEKS). Positions 542 to 554 (VKPKKKKKKKKKT) are enriched in basic residues. The segment at 657-703 (RCICEVQEENDFMIQCEECQCWQHGVCMGLLEENVPEKYTCYVCQDP) adopts a PHD-type zinc-finger fold. The segment at 804–827 (RSEESPSYRTLNGAVEKPSPLPRS) is disordered. Residue K841 is modified to N6-acetyllysine. Phosphoserine occurs at positions 876 and 878. The disordered stretch occupies residues 877–902 (LSPRLGWPIDQDRSRGDIDPKPSSPK). The segment covering 886–902 (DQDRSRGDIDPKPSSPK) has biased composition (basic and acidic residues).

As to quaternary structure, homodimer; disulfide-linked. Component of some MLL1/MLL complex, at least composed of the core components KMT2A/MLL1, ASH2L, HCFC1, WDR5 and RBBP5, as well as the facultative components BACC1, CHD8, E2F6, HSP70, INO80C, KANSL1, LAS1L, MAX, MCRS1, MGA, MYST1/MOF, PELP1, PHF20, PRP31, RING2, RUVB1/TIP49A, RUVB2/TIP49B, SENP3, TAF1, TAF4, TAF6, TAF7, TAF9 and TEX10. Component of the NSL complex at least composed of MOF/KAT8, KANSL1, KANSL2, KANSL3, MCRS1, PHF20, OGT1/OGT, WDR5 and HCFC1. Ubiquitinated by TRIM26; leading to proteasomal degradation.

Its subcellular location is the nucleus. Its function is as follows. Contributes to methyllysine-dependent p53/TP53 stabilization and up-regulation after DNA damage. Methyllysine-binding protein, component of the MOF histone acetyltransferase protein complex. Not required for maintaining the global histone H4 'Lys-16' acetylation (H4K16ac) levels or locus specific histone acetylation, but instead works downstream in transcriptional regulation of MOF target genes. As part of the NSL complex it may be involved in acetylation of nucleosomal histone H4 on several lysine residues. In Mus musculus (Mouse), this protein is PHD finger protein 20 (Phf20).